The sequence spans 35 residues: Photosystem I reaction center subunit Z (35 aa).

A helical membrane pass occupies residues 10–30 (LVIITTLVVPFMAAAALLFII).

As to quaternary structure, the G.violaceus PSI reaction center is composed of one copy each of PsaA,B,C,D,E,F,L,M and Z, and forms trimeric complexes.

The protein localises to the cell inner membrane. The protein is Photosystem I reaction center subunit Z (psaZ) of Gloeobacter violaceus (strain ATCC 29082 / PCC 7421).